The sequence spans 109 residues: Flagellar hook-basal body complex protein FliE (109 aa).

It belongs to the FliE family.

It localises to the bacterial flagellum basal body. In Nitrosomonas eutropha (strain DSM 101675 / C91 / Nm57), this protein is Flagellar hook-basal body complex protein FliE.